A 78-amino-acid chain; its full sequence is Large ribosomal subunit protein bL28 (78 aa).

This sequence belongs to the bacterial ribosomal protein bL28 family.

In Synechococcus sp. (strain ATCC 27144 / PCC 6301 / SAUG 1402/1) (Anacystis nidulans), this protein is Large ribosomal subunit protein bL28.